The primary structure comprises 830 residues: DNA replication licensing factor MCM6 (830 aa).

The segment at 159–186 (CLDCGNVVKNVEQQFKYTEPIICVNATC) adopts a C4-type zinc-finger fold. Positions 349 to 555 (FFNKIVDSIC…NTDYHIAHHI (207 aa)) constitute an MCM domain. 399-406 (GDPSCAKS) provides a ligand contact to ATP. An Arginine finger motif is present at residues 531–534 (SRFD). Residues 671–710 (DFQDADDGTNVPADNDAGQPTEMDAAPQQDGPENEQAADT) form a disordered region.

Belongs to the MCM family. As to quaternary structure, component of the minichromosome maintenance (MCM) complex, a heterotetramer composed of MCM2, MCM3, MCM4, MCM5, MCM6 and MCM7.

The protein localises to the nucleus. The enzyme catalyses ATP + H2O = ADP + phosphate + H(+). Its function is as follows. Probable component of the MCM2-7 complex (MCM complex) that may function as a DNA helicase and which is essential to undergo a single round of replication initiation and elongation per cell cycle in eukaryotic cells. The protein is DNA replication licensing factor MCM6 (MCM6) of Oryza sativa subsp. indica (Rice).